The sequence spans 950 residues: Protocadherin alpha-6 (950 aa).

Residues Met1–Gly29 form the signal peptide. The Extracellular portion of the chain corresponds to Gln30–Asn697. 6 consecutive Cadherin domains span residues Ser34 to Phe133, Ala157 to Phe242, Glu243 to Ile350, Ala351 to Phe455, Ala456 to Leu565, and Val581 to Ala678. Asn257, Asn265, Asn386, and Asn548 each carry an N-linked (GlcNAc...) asparagine glycan. Residues Val698–Tyr718 traverse the membrane as a helical segment. Residues Thr719–Gln950 are Cytoplasmic-facing. PXXP repeat units lie at residues Pro799–Pro802, Pro832–Pro835, Pro873–Pro876, and Pro891–Pro894. The tract at residues Pro799–Pro894 is 4 X 4 AA repeats of P-X-X-P. A disordered region spans residues Ala830 to Ile889. Residues Gln901 to Gln950 are disordered. Over residues Asp909–Lys923 the composition is skewed to basic and acidic residues.

It is found in the cell membrane. Its function is as follows. Potential calcium-dependent cell-adhesion protein. May be involved in the establishment and maintenance of specific neuronal connections in the brain. This Pan troglodytes (Chimpanzee) protein is Protocadherin alpha-6 (PCDHA6).